We begin with the raw amino-acid sequence, 283 residues long: Protein/nucleic acid deglycase HchA (283 aa).

His86, Glu91, and His123 together coordinate Zn(2+). Residue Cys185 is the Nucleophile of the active site.

The protein belongs to the peptidase C56 family. HchA subfamily. As to quaternary structure, homodimer.

The protein localises to the cytoplasm. It carries out the reaction N(omega)-(1-hydroxy-2-oxopropyl)-L-arginyl-[protein] + H2O = lactate + L-arginyl-[protein] + H(+). It catalyses the reaction N(6)-(1-hydroxy-2-oxopropyl)-L-lysyl-[protein] + H2O = lactate + L-lysyl-[protein] + H(+). The catalysed reaction is S-(1-hydroxy-2-oxopropyl)-L-cysteinyl-[protein] + H2O = lactate + L-cysteinyl-[protein] + H(+). The enzyme catalyses N(omega)-(1-hydroxy-2-oxoethyl)-L-arginyl-[protein] + H2O = L-arginyl-[protein] + glycolate + H(+). It carries out the reaction N(6)-(1-hydroxy-2-oxoethyl)-L-lysyl-[protein] + H2O = glycolate + L-lysyl-[protein] + H(+). It catalyses the reaction S-(1-hydroxy-2-oxoethyl)-L-cysteinyl-[protein] + H2O = glycolate + L-cysteinyl-[protein] + H(+). The catalysed reaction is N(2)-(1-hydroxy-2-oxopropyl)-dGTP + H2O = lactate + dGTP + H(+). The enzyme catalyses N(2)-(1-hydroxy-2-oxopropyl)-GTP + H2O = lactate + GTP + H(+). It carries out the reaction N(2)-(1-hydroxy-2-oxopropyl)-GDP + H2O = lactate + GDP + H(+). It catalyses the reaction N(2)-(1-hydroxy-2-oxopropyl)-GMP + H2O = lactate + GMP + H(+). The catalysed reaction is N(2)-(1-hydroxy-2-oxoethyl)-dGTP + H2O = dGTP + glycolate + H(+). The enzyme catalyses N(2)-(1-hydroxy-2-oxoethyl)-GTP + H2O = glycolate + GTP + H(+). It carries out the reaction N(2)-(1-hydroxy-2-oxoethyl)-GDP + H2O = glycolate + GDP + H(+). It catalyses the reaction N(2)-(1-hydroxy-2-oxoethyl)-GMP + H2O = glycolate + GMP + H(+). The catalysed reaction is an N(2)-(1-hydroxy-2-oxopropyl)-guanosine in RNA + H2O = a guanosine in RNA + lactate + H(+). The enzyme catalyses an N(2)-(1-hydroxy-2-oxopropyl)-2'-deoxyguanosine in DNA + H2O = a 2'-deoxyguanosine in DNA + lactate + H(+). It carries out the reaction an N(2)-(1-hydroxy-2-oxoethyl)-guanosine in RNA + H2O = a guanosine in RNA + glycolate + H(+). It catalyses the reaction an N(2)-(1-hydroxy-2-oxoethyl)-2'-deoxyguanosine in DNA + H2O = a 2'-deoxyguanosine in DNA + glycolate + H(+). Functionally, protein and nucleotide deglycase that catalyzes the deglycation of the Maillard adducts formed between amino groups of proteins or nucleotides and reactive carbonyl groups of glyoxals. Thus, functions as a protein deglycase that repairs methylglyoxal- and glyoxal-glycated proteins, and releases repaired proteins and lactate or glycolate, respectively. Deglycates cysteine, arginine and lysine residues in proteins, and thus reactivates these proteins by reversing glycation by glyoxals. Acts on early glycation intermediates (hemithioacetals and aminocarbinols), preventing the formation of Schiff bases and advanced glycation endproducts (AGE). Also functions as a nucleotide deglycase able to repair glycated guanine in the free nucleotide pool (GTP, GDP, GMP, dGTP) and in DNA and RNA. Is thus involved in a major nucleotide repair system named guanine glycation repair (GG repair), dedicated to reversing methylglyoxal and glyoxal damage via nucleotide sanitization and direct nucleic acid repair. Plays an important role in protecting cells from carbonyl stress. This is Protein/nucleic acid deglycase HchA from Escherichia coli O81 (strain ED1a).